The chain runs to 3131 residues: Enniatin synthase (3131 aa).

A condensation 1 region spans residues alanine 53 to glutamate 466. The tract at residues asparagine 186–serine 212 is disordered. The interval serine 495–arginine 887 is adenylation 1. The Carrier 1 domain occupies serine 1010 to serine 1086. Residue serine 1047 is modified to O-(pantetheine 4'-phosphoryl)serine. Residues serine 1105–threonine 1534 are condensation 2. Residues phenylalanine 1563 to arginine 1960 are adenylation 2. The S-adenosyl-L-methionine-dependent N-methyltransferase stretch occupies residues glutamate 2021–isoleucine 2177. 2 Carrier domains span residues phenylalanine 2504–leucine 2578 and alanine 2598–histidine 2671. Residues serine 2538 and serine 2632 each carry the O-(pantetheine 4'-phosphoryl)serine modification. Residues glutamine 2718–threonine 3123 are condensation 3.

This sequence belongs to the ATP-dependent AMP-binding enzyme family. Requires pantetheine 4'-phosphate as cofactor. In terms of processing, the N-terminus is blocked.

The protein operates within antibiotic biosynthesis; enniatin biosynthesis. With respect to regulation, the N-methylation activity is inhibited by S-adenosyl-L-homocysteine and sinefugin. In terms of biological role, nonribosomal peptide synthetase that synthesizes enniatin by coupling three D-hydroxycarboxylic acids and three L-amino acids via amide and ester bonds in an alternating fashion. Whereas ESYN1 can accept different amino acids as precursors (L -valine, L-isoleucine or L-leucine), only one species of D-hydroxycarboxylic acid can be found in natural enniatin isolates (D-hydroxyisovaleric acid, D-Hiv). D-Hiv stems from L-valine deanimation by a valine aminotransferase to 2-keto-isovaleric acid (2-Kiv), which becomes subsequently reduced by a keto-isovaleric acid reductase (KivR) to D-Hiv. Peptide bond formation and N-methylation of the amino acid occur before three enzyme-bound dipeptidols are condensed to a hexapeptidol. The chain is Enniatin synthase from Fusarium equiseti (Fusarium scirpi).